The sequence spans 196 residues: Putative AAA family ATPase L572 (196 aa).

32-39 provides a ligand contact to ATP; it reads NAVNCKET.

The protein belongs to the AAA ATPase family.

This chain is Putative AAA family ATPase L572, found in Acanthamoeba polyphaga mimivirus (APMV).